The following is a 435-amino-acid chain: Trigger factor (435 aa).

A PPIase FKBP-type domain is found at 163 to 248 (GDRVTIDFEG…LTRIEAQNLP (86 aa)).

This sequence belongs to the FKBP-type PPIase family. Tig subfamily.

The protein localises to the cytoplasm. The enzyme catalyses [protein]-peptidylproline (omega=180) = [protein]-peptidylproline (omega=0). Functionally, involved in protein export. Acts as a chaperone by maintaining the newly synthesized protein in an open conformation. Functions as a peptidyl-prolyl cis-trans isomerase. This is Trigger factor from Leptothrix cholodnii (strain ATCC 51168 / LMG 8142 / SP-6) (Leptothrix discophora (strain SP-6)).